A 4069-amino-acid chain; its full sequence is Cardiomyopathy-associated protein 5 (4069 aa).

23 disordered regions span residues 1–177 (MASR…SQVL), 341–387 (TVPS…DTPA), 442–525 (GLAA…EDSN), 538–558 (ESPLVSEKPFPPHMSPEVEHK), 597–705 (EYSV…VPSL), 732–793 (PSEE…RFTP), 844–872 (SSPDLVVASEHSFPPHTTEMTSECQAPPL), 890–948 (LERY…FSPD), 979–1009 (TSPSEHTILSDEDTEEAELFSPDSASQVSIP), 1041–1097 (ADEE…PEIP), 1160–1179 (VKEETKPASPHSVLPDSVPA), 1205–1237 (RKEEIVPDSQEATAHVSQDQKMEPQPPNVPESE), 1540–1575 (KETELPSSQNVSPASKHIIPKGKDEETASSSPELEN), 1594–1742 (PAVE…EEFQ), 1757–1809 (HPAD…ITEP), 1892–1988 (ENWM…VKLA), 2064–2175 (TISS…KKGI), 2187–2259 (FGSS…SGDG), 2385–2412 (PQQPKSASSNFASKNITKESEKPESIIL), 2425–2463 (SEDRLKKEMQNPTSLKISEEETKLRSVSPTEKKDNLENR), 2494–2527 (TQITLGSRSTELKESKADAMPQHFYQNEDYNERP), 2653–2706 (QEGN…VGTQ), and 2750–2862 (SSRD…SDVP). Residues 27–47 (ETEEESEGEEDETAAESEEEP) are compositionally biased toward acidic residues. Basic and acidic residues predominate over residues 48 to 62 (DSRLSDQDEEGKIKQ). The span at 84–119 (TWETNSSRSSTPWASEESQTSGVCSREGSTVNSPPG) shows a compositional bias: polar residues. Over residues 130 to 153 (KVRKRTHKSKHGSPSLRRKGNRKR) the composition is skewed to basic residues. Ser-155 bears the Phosphoserine mark. Polar residues-rich tracts occupy residues 156–177 (FESQDVPTNKKGSPLTSASQVL) and 341–350 (TVPSYSSSGR). Positions 489–499 (LEPSISLSEPL) are enriched in low complexity. Residues 500–510 (MLEEPEKEEIE) show a composition bias toward acidic residues. A Phosphoserine modification is found at Ser-631. Residues 640–659 (AYSPAAAPTSESSLSPSTTE) show a composition bias toward low complexity. 3 stretches are compositionally biased toward polar residues: residues 664 to 673 (NQSPLFSTVT), 692 to 701 (PDSTSASEYS), and 752 to 775 (PSLSPSTTEKTSECQSPLPSTATS). A compositionally biased stretch (polar residues) spans 1049–1063 (TAATPVSEQFSSSQK). Residues 1085 to 1094 (DKSEKAEIKP) are compositionally biased toward basic and acidic residues. Over residues 1214–1223 (QEATAHVSQD) the composition is skewed to polar residues. The segment covering 1621 to 1630 (EPEKKDKPHQ) has biased composition (basic and acidic residues). Polar residues predominate over residues 1639–1662 (SEFSSDLGRQSGSIGTKQAKSPIT). 3 stretches are compositionally biased toward basic and acidic residues: residues 1668-1687 (VLEKGPAELRSREGKEENRE), 1704-1714 (LREESQNEEIK), and 1786-1795 (ILDKLSEETG). Residues 1796 to 1808 (HPNSSQVLQSITE) are compositionally biased toward polar residues. A compositionally biased stretch (basic and acidic residues) spans 1935–1955 (SKDHTCEVRKQVLPHSAEESH). Residues 1956–1980 (LSSQEAVSALDTSSGNTETLSSKSY) are compositionally biased toward polar residues. The segment covering 2085 to 2124 (NEKEAHRSTPPFPEEKPLEESKMVQSKVIDDADEGKKPSP) has biased composition (basic and acidic residues). The span at 2145–2155 (SPESPEVTQNP) shows a compositional bias: polar residues. Composition is skewed to basic and acidic residues over residues 2162 to 2172 (AKPDLPEEKGK) and 2232 to 2250 (KPADHSLSEVKLKTADEPR). Residues 2387–2399 (QPKSASSNFASKN) show a composition bias toward polar residues. The residue at position 2404 (Ser-2404) is a Phosphoserine. Residues 2441–2461 (ISEEETKLRSVSPTEKKDNLE) show a composition bias toward basic and acidic residues. 3 stretches are compositionally biased toward basic and acidic residues: residues 2661-2681 (KSSRDMPDHSEEKEQFRESEL), 2750-2769 (SSRDMPDHSEEKEQFKESEL), and 2777-2804 (ITKESMKEGFPSKESERTLARPFDETKS). At Ser-2813 the chain carries Phosphoserine. A compositionally biased stretch (basic and acidic residues) spans 2830 to 2847 (AVKKKEMPRSELTPERHT). Residues 2964 to 2988 (SIDQEESEQMQDKLEYLEEKASFKT) are a coiled coil. Over residues 3015–3031 (PLKENKQKETHKTKEEI) the composition is skewed to basic and acidic residues. Disordered regions lie at residues 3015-3037 (PLKENKQKETHKTKEEISTDSET), 3119-3156 (EKGHNILSHPETQSQNSADRNVSKDTKRDVDSKSPGMP), 3204-3231 (KKKEEETASEGDSVNSEASFPSRNSDTD), 3386-3421 (SGATHVQETSLEEPKILVPPEPSEERLRNSPVQDEY), and 3465-3495 (EFASEAEQSTPAEQKELGSERKEEDQLSSEV). Positions 3052–3365 (YFEKYTLIDY…GSHGNEVGNA (314 aa)) are required for RYR2 clustering. Over residues 3128-3138 (PETQSQNSADR) the composition is skewed to polar residues. Residues 3139–3150 (NVSKDTKRDVDS) show a composition bias toward basic and acidic residues. Over residues 3213–3227 (EGDSVNSEASFPSRN) the composition is skewed to polar residues. Ser-3228 carries the post-translational modification Phosphoserine. Residues 3477–3489 (EQKELGSERKEED) show a composition bias toward basic and acidic residues. The tract at residues 3517–3544 (KCPISATDKVFGTHKDHEVSTLDTAISA) is amphipathic helix H1. Residues 3544–3653 (AVKVQLAEFL…REAEELDEAV (110 aa)) adopt a coiled-coil conformation. The segment at 3545–3672 (VKVQLAEFLE…ERLLSAMEST (128 aa)) is B-box coiled-coil; BBC. Residues 3631–3648 (SMDTAKDTLETIVREAEE) are amphipathic helix H2. Fibronectin type-III domains lie at 3704–3805 (VPQP…TAPS) and 3806–3898 (TPVI…TRGT). The amphipathic helix H3 stretch occupies residues 3751–3767 (EVNELVEEYRLTVKESY). One can recognise a B30.2/SPRY domain in the interval 3880–4065 (NAFGTSEQSE…LHLGIEPPDS (186 aa)).

In terms of assembly, interacts with PRKAR2A. Interacts with ACTN2 and DTNBP1/dysbindin. Interacts with DES. Interacts with DMD/dystrophin. Interacts with the calcineurin catalytic subunit PPP3CA. Interacts with TTN. Interacts with CAPN3; this interaction, which results in CMYA5 proteolysis, may protect CAPN3 from autolysis. Interacts with FSD2. Identified in a complex composed of FSD2, CMYA5 and RYR2. In terms of processing, phosphorylated by PKA. In terms of tissue distribution, expressed in skeletal muscle; at a strong level and in heart.

It localises to the nucleus. The protein resides in the sarcoplasmic reticulum. The protein localises to the cytoplasm. Its subcellular location is the perinuclear region. It is found in the myofibril. It localises to the sarcomere. The protein resides in the m line. May serve as an anchoring protein that mediates the subcellular compartmentation of protein kinase A (PKA) via binding to PRKAR2A. May function as a repressor of calcineurin-mediated transcriptional activity. May attenuate calcineurin ability to induce slow-fiber gene program in muscle and may negatively modulate skeletal muscle regeneration. Plays a role in the assembly of ryanodine receptor (RYR2) clusters in striated muscle. In Homo sapiens (Human), this protein is Cardiomyopathy-associated protein 5 (CMYA5).